Here is a 247-residue protein sequence, read N- to C-terminus: 3-deoxy-manno-octulosonate cytidylyltransferase (247 aa).

The protein belongs to the KdsB family.

It localises to the cytoplasm. The catalysed reaction is 3-deoxy-alpha-D-manno-oct-2-ulosonate + CTP = CMP-3-deoxy-beta-D-manno-octulosonate + diphosphate. The protein operates within nucleotide-sugar biosynthesis; CMP-3-deoxy-D-manno-octulosonate biosynthesis; CMP-3-deoxy-D-manno-octulosonate from 3-deoxy-D-manno-octulosonate and CTP: step 1/1. It participates in bacterial outer membrane biogenesis; lipopolysaccharide biosynthesis. Activates KDO (a required 8-carbon sugar) for incorporation into bacterial lipopolysaccharide in Gram-negative bacteria. The protein is 3-deoxy-manno-octulosonate cytidylyltransferase of Methylorubrum populi (strain ATCC BAA-705 / NCIMB 13946 / BJ001) (Methylobacterium populi).